Here is a 65-residue protein sequence, read N- to C-terminus: Peptide ToAcP (65 aa).

The N-terminal stretch at 1-24 (MKMKMIVVISILLIVFSLSSKAMS) is a signal peptide. Residues 25 to 34 (LEDEQESVQR) constitute a propeptide that is removed on maturation. The residue at position 58 (Ala-58) is an Alanine amide. Positions 59–65 (GRFDPAV) are excised as a propeptide.

In terms of tissue distribution, expressed by the venom gland.

The protein localises to the secreted. Functionally, helical wheel projections predict no hydrophobic face, suggesting a non-amphipathic peptide. Does not show antifungal activity. In Tityus obscurus (Amazonian scorpion), this protein is Peptide ToAcP.